Reading from the N-terminus, the 227-residue chain is Cleavage and polyadenylation specificity factor subunit 5 (227 aa).

N-acetylserine is present on Ser2. Residues 2–147 (SVVPPNRSQT…DWVIDDCIGN (146 aa)) form a necessary for RNA-binding region. Arg15 carries the omega-N-methylarginine modification. N6-acetyllysine occurs at positions 23 and 29. Tyr40 is subject to Phosphotyrosine. N6-acetyllysine is present on Lys56. The Nudix hydrolase domain occupies 76 to 201 (MRRTVEGVLI…KLVAAPLFEL (126 aa)). The interval 81-160 (EGVLIVHEHR…PNFEPPQYPY (80 aa)) is necessary for interactions with PAPOLA and PABPN1. Positions 102–104 (TFF) are interaction with RNA. The Nudix box signature appears at 109-130 (GELNPGEDEVEGLKRLMTEILG).

This sequence belongs to the Nudix hydrolase family. CPSF5 subfamily. Homodimer (via N- and C-terminus); binds RNA as homodimer. Component of the cleavage factor Im (CFIm) complex which is a heterotetramer composed of two subunits of NUDT21/CPSF5 and two subunits of CPSF6 or CPSF7 or a heterodimer of CPSF6 and CPSF7. The cleavage factor Im (CFIm) complex associates with the CPSF and CSTF complexes to promote the assembly of the core mRNA 3'-processing machinery. Interacts with CPSF6 (via the RRM domain); this interaction is direct and enhances binding to RNA. Interacts with CPSF7. Interacts with FIP1L1; this interaction occurs in a RNA sequence-specific manner. Interacts with PABPN1. Interacts (via N-terminus) with PAPOLA (via C-terminus); this interaction is direct and diminished by acetylation. Interacts with SNRNP70. Interacts with VIRMA. Acetylated mainly by p300/CBP, recruited to the complex by CPSF6. Acetylation decreases interaction with PAPAO. Deacetylated by the class I/II HDACs, HDAC1, HDAC3 and HDAC10, and by the class III HDACs, SIRT1 and SIRT2.

The protein resides in the nucleus. Its subcellular location is the cytoplasm. Functionally, component of the cleavage factor Im (CFIm) complex that functions as an activator of the pre-mRNA 3'-end cleavage and polyadenylation processing required for the maturation of pre-mRNA into functional mRNAs. CFIm contributes to the recruitment of multiprotein complexes on specific sequences on the pre-mRNA 3'-end, so called cleavage and polyadenylation signals (pA signals). Most pre-mRNAs contain multiple pA signals, resulting in alternative cleavage and polyadenylation (APA) producing mRNAs with variable 3'-end formation. The CFIm complex acts as a key regulator of cleavage and polyadenylation site choice during APA through its binding to 5'-UGUA-3' elements localized in the 3'-untranslated region (UTR) for a huge number of pre-mRNAs. NUDT21/CPSF5 activates indirectly the mRNA 3'-processing machinery by recruiting CPSF6 and/or CPSF7. Binds to 5'-UGUA-3' elements localized upstream of pA signals that act as enhancers of pre-mRNA 3'-end processing. The homodimer mediates simultaneous sequence-specific recognition of two 5'-UGUA-3' elements within the pre-mRNA. Plays a role in somatic cell fate transitions and pluripotency by regulating widespread changes in gene expression through an APA-dependent function. Binds to chromatin. Binds to, but does not hydrolyze mono- and di-adenosine nucleotides. The sequence is that of Cleavage and polyadenylation specificity factor subunit 5 (NUDT21) from Bos taurus (Bovine).